Consider the following 273-residue polypeptide: Undecaprenyl-diphosphatase (273 aa).

Transmembrane regions (helical) follow at residues 3–23 (IILWLQAVILGLVQGMTEFLP), 47–67 (ALDAMQFGSVIAVLGYFWQDI), 90–110 (LLLGITVGTIPALAAGLLLKL), 120–140 (IIATMAIAMAILLGLAEQWGS), 148–168 (IGILDGFLVGCGQMIALLPGA), 186–206 (PTAARFSFLLGIPTLTIATLV), 217–237 (LLIPLVIATLSSMVFSYLAIA), and 249–269 (WVFIWYRIGLGSALWGAIALG).

Belongs to the UppP family.

The protein resides in the cell inner membrane. It catalyses the reaction di-trans,octa-cis-undecaprenyl diphosphate + H2O = di-trans,octa-cis-undecaprenyl phosphate + phosphate + H(+). Catalyzes the dephosphorylation of undecaprenyl diphosphate (UPP). Confers resistance to bacitracin. This is Undecaprenyl-diphosphatase from Thermosynechococcus vestitus (strain NIES-2133 / IAM M-273 / BP-1).